The sequence spans 120 residues: MFLSHQYDSFWIFLLVCISIPLLAFSITRFAAPPREGPEKSTSYESGIEPKGDTWIRFQIRYYMFALVFTVFDVETVFLYPWATSFEELGLFAFVEVIVFIFILIVGLVYAWRKGALEWC.

A run of 3 helical transmembrane segments spans residues 7–27, 63–83, and 89–109; these read YDSF…AFSI, YMFA…YPWA, and LGLF…VGLV.

The protein belongs to the complex I subunit 3 family. NDH is composed of at least 16 different subunits, 5 of which are encoded in the nucleus.

It is found in the plastid. Its subcellular location is the chloroplast thylakoid membrane. The enzyme catalyses a plastoquinone + NADH + (n+1) H(+)(in) = a plastoquinol + NAD(+) + n H(+)(out). It catalyses the reaction a plastoquinone + NADPH + (n+1) H(+)(in) = a plastoquinol + NADP(+) + n H(+)(out). NDH shuttles electrons from NAD(P)H:plastoquinone, via FMN and iron-sulfur (Fe-S) centers, to quinones in the photosynthetic chain and possibly in a chloroplast respiratory chain. The immediate electron acceptor for the enzyme in this species is believed to be plastoquinone. Couples the redox reaction to proton translocation, and thus conserves the redox energy in a proton gradient. In Adiantum capillus-veneris (Maidenhair fern), this protein is NAD(P)H-quinone oxidoreductase subunit 3, chloroplastic.